The sequence spans 174 residues: Probable NAD(P)H dehydrogenase subunit CRR3, chloroplastic (174 aa).

The transit peptide at 1–54 directs the protein to the chloroplast; that stretch reads MAVLSTIYSITRASTPTMASLTNDSPSPLPSSSPSKLPSPTSPSKKPLKLRQVS. Residues 14–24 show a composition bias toward polar residues; that stretch reads STPTMASLTND. The segment at 14 to 71 is disordered; sequence STPTMASLTNDSPSPLPSSSPSKLPSPTSPSKKPLKLRQVSKQMGSQNQQRRGNKPSI. A compositionally biased stretch (low complexity) spans 30–45; the sequence is PSSSPSKLPSPTSPSK. Residues 53–64 show a composition bias toward polar residues; sequence VSKQMGSQNQQR. A helical transmembrane segment spans residues 140 to 160; sequence FTIQWILPIWIMSLLVACGVI.

The protein localises to the plastid. It localises to the chloroplast thylakoid membrane. Functionally, probable subunit of the chloroplast NAD(P)H dehydrogenase (NDH) complex of the photosynthetic electron transport chain. Required for both formation and activity of NDH. May function in assembly or stabilization of the NDH complex. The polypeptide is Probable NAD(P)H dehydrogenase subunit CRR3, chloroplastic (Arabidopsis thaliana (Mouse-ear cress)).